Here is a 299-residue protein sequence, read N- to C-terminus: MFASPVTSTPFSVKDILNLEQHQSGLSPMDITSRLENSSCMLSTFKQESYPGTPCLSELTEEMSQRDTAKGPSSFPGSFFVKNYLEMDSKDPKDHKKDICPLQKTLEHDKREAEDPERPRQRKRRKPRVLFSQAQVYELERRFKQQKYLSAPERDHLANVLKLTSTQVKIWFQNRRYKCKRQRQDQTLEMVGLPPPRRIAVPVLVRDGKPCLGESSPYNSPYNVSINPYSYNTYPAYSNYSNPACSGSYNCSYSSMPSMQPTSAGNNFMNFSVGDLNTVQTPIQQASSVSALHHGIRAW.

The segment covering 90–119 (KDPKDHKKDICPLQKTLEHDKREAEDPERP) has biased composition (basic and acidic residues). Positions 90-128 (KDPKDHKKDICPLQKTLEHDKREAEDPERPRQRKRRKPR) are disordered. The homeobox DNA-binding region spans 124–183 (RRKPRVLFSQAQVYELERRFKQQKYLSAPERDHLANVLKLTSTQVKIWFQNRRYKCKRQR).

Belongs to the NK-2 homeobox family. As to quaternary structure, homodimer (via the homeobox); binds DNA as homodimer. As to expression, heart and gut tissue.

It is found in the nucleus. Transcription factor required for the development of the heart and the spleen. Implicated in commitment to and/or differentiation of the myocardial lineage. May regulate the expression of genes involved in cardiogenesis and play a role in the formation of gut and the pharyngeal region. Binds to the core DNA motif of promoter. The chain is Homeobox protein Nkx-2.5 (nkx-2.5) from Xenopus laevis (African clawed frog).